The following is a 167-amino-acid chain: uncharacterized protein (167 aa).

Positions 1–23 (MKRLHKRFLLATFCALFTATLQA) are cleaved as a signal peptide. The cysteines at positions 39 and 77 are disulfide-linked.

This sequence belongs to the fimbrial protein family.

The protein resides in the fimbrium. This is an uncharacterized protein from Escherichia coli (strain K12).